A 411-amino-acid chain; its full sequence is Arginine deiminase (411 aa).

The Amidino-cysteine intermediate role is filled by cysteine 399.

It belongs to the arginine deiminase family.

Its subcellular location is the cytoplasm. The catalysed reaction is L-arginine + H2O = L-citrulline + NH4(+). Its pathway is amino-acid degradation; L-arginine degradation via ADI pathway; carbamoyl phosphate from L-arginine: step 1/2. This is Arginine deiminase from Latilactobacillus sakei subsp. sakei (strain 23K) (Lactobacillus sakei subsp. sakei).